A 434-amino-acid polypeptide reads, in one-letter code: 3-phosphoshikimate 1-carboxyvinyltransferase (434 aa).

3-phosphoshikimate-binding residues include K22, S23, and R27. K22 provides a ligand contact to phosphoenolpyruvate. Phosphoenolpyruvate-binding residues include G93 and R121. 3-phosphoshikimate is bound by residues S168, S169, Q170, S199, D320, and K347. Q170 lines the phosphoenolpyruvate pocket. D320 functions as the Proton acceptor in the catalytic mechanism. Residues R351, R394, and K419 each contribute to the phosphoenolpyruvate site.

It belongs to the EPSP synthase family. Monomer.

Its subcellular location is the cytoplasm. It carries out the reaction 3-phosphoshikimate + phosphoenolpyruvate = 5-O-(1-carboxyvinyl)-3-phosphoshikimate + phosphate. It participates in metabolic intermediate biosynthesis; chorismate biosynthesis; chorismate from D-erythrose 4-phosphate and phosphoenolpyruvate: step 6/7. In terms of biological role, catalyzes the transfer of the enolpyruvyl moiety of phosphoenolpyruvate (PEP) to the 5-hydroxyl of shikimate-3-phosphate (S3P) to produce enolpyruvyl shikimate-3-phosphate and inorganic phosphate. This is 3-phosphoshikimate 1-carboxyvinyltransferase from Paraburkholderia phymatum (strain DSM 17167 / CIP 108236 / LMG 21445 / STM815) (Burkholderia phymatum).